A 210-amino-acid polypeptide reads, in one-letter code: Large ribosomal subunit protein uL3 (210 aa).

Residues 125 to 151 (RHGQSRGPMSHGSRYHRRPGSMGPVAP) form a disordered region.

The protein belongs to the universal ribosomal protein uL3 family. Part of the 50S ribosomal subunit. Forms a cluster with proteins L14 and L19.

One of the primary rRNA binding proteins, it binds directly near the 3'-end of the 23S rRNA, where it nucleates assembly of the 50S subunit. The sequence is that of Large ribosomal subunit protein uL3 from Bacillus cereus (strain Q1).